Here is a 406-residue protein sequence, read N- to C-terminus: NAD(P)H-quinone oxidoreductase subunit H, organellar chromatophore (406 aa).

This sequence belongs to the complex I 49 kDa subunit family. In terms of assembly, NDH is composed of at least 16 different subunits, 5 of which are encoded in the nucleus.

The protein localises to the plastid. Its subcellular location is the organellar chromatophore thylakoid membrane. The catalysed reaction is a quinone + NADH + H(+) = a quinol + NAD(+). In terms of biological role, NDH shuttles electrons from NAD(P)H:plastoquinone, via FMN and iron-sulfur (Fe-S) centers, to quinones in the photosynthetic chain and possibly in a chloroplast respiratory chain. The immediate electron acceptor for the enzyme in this species is believed to be plastoquinone. Couples the redox reaction to proton translocation, and thus conserves the redox energy in a proton gradient. The polypeptide is NAD(P)H-quinone oxidoreductase subunit H, organellar chromatophore (Paulinella chromatophora).